The sequence spans 366 residues: Ribosomal RNA large subunit methyltransferase M (366 aa).

S-adenosyl-L-methionine is bound by residues Ser-188, 221–224, Asp-240, Asp-260, and Asp-277; that span reads CPGG. Lys-306 acts as the Proton acceptor in catalysis.

It belongs to the class I-like SAM-binding methyltransferase superfamily. RNA methyltransferase RlmE family. RlmM subfamily. In terms of assembly, monomer.

Its subcellular location is the cytoplasm. It carries out the reaction cytidine(2498) in 23S rRNA + S-adenosyl-L-methionine = 2'-O-methylcytidine(2498) in 23S rRNA + S-adenosyl-L-homocysteine + H(+). Functionally, catalyzes the 2'-O-methylation at nucleotide C2498 in 23S rRNA. This is Ribosomal RNA large subunit methyltransferase M from Escherichia coli O139:H28 (strain E24377A / ETEC).